The primary structure comprises 590 residues: (+)-sabinene synthase, chloroplastic (590 aa).

The transit peptide at 1–51 (MSSISINIAMPLNSLHNFERKPSKAWSTSCTAPAARLRASSSLQQEKPHQI) directs the protein to the chloroplast. Mg(2+) contacts are provided by D343, D347, D487, T491, and E495. The DDXXD motif signature appears at 343–347 (DDVYD).

The protein belongs to the terpene synthase family. In terms of assembly, monomer. The cofactor is Mg(2+).

The protein resides in the plastid. Its subcellular location is the chloroplast. The enzyme catalyses (2E)-geranyl diphosphate = (1R,5R)-sabinene + diphosphate. Its pathway is terpene metabolism; sabinene hydrate biosynthesis. Its function is as follows. Catalyzes the formation of the (-)-3-isothujone precursor sabinene from geranyl diphosphate. The enzyme also produces significant amounts of gamma-terpinene, terpinolene and limonene. This is (+)-sabinene synthase, chloroplastic from Salvia officinalis (Sage).